The sequence spans 863 residues: Alanine--tRNA ligase (863 aa).

Zn(2+)-binding residues include His-552, His-556, Cys-654, and His-658.

Belongs to the class-II aminoacyl-tRNA synthetase family. It depends on Zn(2+) as a cofactor.

It is found in the cytoplasm. The catalysed reaction is tRNA(Ala) + L-alanine + ATP = L-alanyl-tRNA(Ala) + AMP + diphosphate. In terms of biological role, catalyzes the attachment of alanine to tRNA(Ala) in a two-step reaction: alanine is first activated by ATP to form Ala-AMP and then transferred to the acceptor end of tRNA(Ala). Also edits incorrectly charged Ser-tRNA(Ala) and Gly-tRNA(Ala) via its editing domain. The polypeptide is Alanine--tRNA ligase (Nitrosomonas eutropha (strain DSM 101675 / C91 / Nm57)).